The sequence spans 300 residues: Protoheme IX farnesyltransferase (300 aa).

Transmembrane regions (helical) follow at residues 24 to 44 (VTQL…PGMV), 48 to 68 (VLLG…AINC), 94 to 114 (LQIL…LYTF), 118 to 138 (LTMW…TLLL), 146 to 166 (IVIG…AVTG), 172 to 192 (AWIL…VLAL), 217 to 237 (LHIL…FISG), 239 to 259 (SGAV…AYAW), and 278 to 298 (IVYL…RPVI).

This sequence belongs to the UbiA prenyltransferase family. Protoheme IX farnesyltransferase subfamily.

Its subcellular location is the cell inner membrane. It carries out the reaction heme b + (2E,6E)-farnesyl diphosphate + H2O = Fe(II)-heme o + diphosphate. The protein operates within porphyrin-containing compound metabolism; heme O biosynthesis; heme O from protoheme: step 1/1. Functionally, converts heme B (protoheme IX) to heme O by substitution of the vinyl group on carbon 2 of heme B porphyrin ring with a hydroxyethyl farnesyl side group. This chain is Protoheme IX farnesyltransferase, found in Burkholderia pseudomallei (strain 1106a).